Reading from the N-terminus, the 215-residue chain is Putative BTB/POZ domain-containing protein At2g05330 (215 aa).

The region spanning 17-87 (SWQKIGKLTY…LYSDGSMLSS (71 aa)) is the BTB domain.

It participates in protein modification; protein ubiquitination. Functionally, may act as a substrate-specific adapter of an E3 ubiquitin-protein ligase complex (CUL3-RBX1-BTB) which mediates the ubiquitination and subsequent proteasomal degradation of target proteins. In Arabidopsis thaliana (Mouse-ear cress), this protein is Putative BTB/POZ domain-containing protein At2g05330.